Here is a 241-residue protein sequence, read N- to C-terminus: 3-deoxy-manno-octulosonate cytidylyltransferase (241 aa).

Belongs to the KdsB family.

The protein resides in the cytoplasm. The catalysed reaction is 3-deoxy-alpha-D-manno-oct-2-ulosonate + CTP = CMP-3-deoxy-beta-D-manno-octulosonate + diphosphate. The protein operates within nucleotide-sugar biosynthesis; CMP-3-deoxy-D-manno-octulosonate biosynthesis; CMP-3-deoxy-D-manno-octulosonate from 3-deoxy-D-manno-octulosonate and CTP: step 1/1. Its pathway is bacterial outer membrane biogenesis; lipopolysaccharide biosynthesis. Its function is as follows. Activates KDO (a required 8-carbon sugar) for incorporation into bacterial lipopolysaccharide in Gram-negative bacteria. This chain is 3-deoxy-manno-octulosonate cytidylyltransferase, found in Rickettsia rickettsii (strain Sheila Smith).